The sequence spans 215 residues: Sodium channel regulatory subunit beta-2 (215 aa).

The N-terminal stretch at methionine 1–serine 29 is a signal peptide. Residues methionine 30–threonine 157 are Extracellular-facing. Residues valine 32 to arginine 154 enclose the Ig-like C2-type domain. 3 N-linked (GlcNAc...) asparagine glycosylation sites follow: asparagine 42, asparagine 66, and asparagine 74. 2 cysteine pairs are disulfide-bonded: cysteine 50–cysteine 127 and cysteine 72–cysteine 75. The helical transmembrane segment at valine 158 to valine 179 threads the bilayer. At valine 180 to lysine 215 the chain is on the cytoplasmic side. The interval lysine 187–lysine 215 is disordered. Residues glutamine 189–lysine 215 show a composition bias toward basic and acidic residues. Serine 192 bears the Phosphoserine mark. At threonine 204 the chain carries Phosphothreonine.

It belongs to the sodium channel auxiliary subunit SCN2B (TC 8.A.17) family. As to quaternary structure, a voltage-gated sodium (Nav) channel consists of an ion-conducting pore-forming alpha subunit functional on its own that is regulated by one or more beta subunits. The beta subunit SCN2B is disulfide-linked to the pore-forming alpha subunit. Interacts with SCN1A; regulatory subunit of SCN1A/Nav1.1. Interacts with SCN2A; regulatory subunit of SCN2A/Nav1.2. Interacts with SCN3A; regulatory subunit of SCN3A/Nav1.3. Interacts with SCN5A; regulatory subunit of SCN5A/Nav1.5. Interacts with SCN8A; regulatory subunit of SCN8A/Nav1.6. Interacts with SCN9A; regulatory subunit of SCN9A/Nav1.7. Interacts with SCN10A; regulatory subunit of SCN10A/Nav1.8. Interacts with TNR; may play a crucial role in clustering and regulation of activity of SCN2B-containing Nav channels at nodes of Ranvier.

Its subcellular location is the cell membrane. It localises to the cell projection. The protein resides in the axon. Its function is as follows. Regulatory subunit of multiple voltage-gated sodium (Nav) channels, that directly mediate the depolarization of excitable membranes. Navs, also called VGSCs (voltage-gated sodium channels) or VDSCs (voltage-dependent sodium channels), operate by switching between closed and open conformations depending on the voltage difference across the membrane. In the open conformation they allow Na(+) ions to selectively pass through the pore, along their electrochemical gradient. The influx of Na+ ions provokes membrane depolarization, initiating the propagation of electrical signals throughout cells and tissues. The accessory beta subunits participate in localization and functional modulation of the Nav channels. Modulates the activity of SCN1A/Nav1.1, SCN2A/Nav1.2, SCN2A/Nav1.3, SCN5A/Nav1.5, SCN8A/Nav1.6, SCN9A/Nav1.7 and SCN10A/Nav1.8. The chain is Sodium channel regulatory subunit beta-2 from Canis lupus familiaris (Dog).